The sequence spans 365 residues: Putative clathrin assembly protein At4g40080 (365 aa).

Residues Asn29–Ile167 enclose the ENTH domain.

The protein resides in the membrane. The protein localises to the clathrin-coated pit. It localises to the golgi apparatus. It is found in the cytoplasmic vesicle. Its subcellular location is the clathrin-coated vesicle. The sequence is that of Putative clathrin assembly protein At4g40080 from Arabidopsis thaliana (Mouse-ear cress).